Here is a 187-residue protein sequence, read N- to C-terminus: Cell division protein SepF (187 aa).

The tract at residues 13–74 is disordered; that stretch reads GLAEDDRYAE…PAPATTAQVT (62 aa). Over residues 16-65 the composition is skewed to basic and acidic residues; sequence EDDRYAEDTEPETTRPRVEAAREVRVESRHEARPEVRHEPRPEVSVERRP.

Belongs to the SepF family. In terms of assembly, homodimer. Interacts with FtsZ.

The protein localises to the cytoplasm. In terms of biological role, cell division protein that is part of the divisome complex and is recruited early to the Z-ring. Probably stimulates Z-ring formation, perhaps through the cross-linking of FtsZ protofilaments. Its function overlaps with FtsA. This is Cell division protein SepF from Kineococcus radiotolerans (strain ATCC BAA-149 / DSM 14245 / SRS30216).